The sequence spans 409 residues: Spermatogenesis-associated protein 2-like protein (409 aa).

Disordered regions lie at residues 233–257, 270–299, and 313–337; these read EDEG…TSEL, LWGA…PQPE, and RPGD…IPEP.

It belongs to the SPATA2 family.

The protein is Spermatogenesis-associated protein 2-like protein (SPATA2L) of Bos taurus (Bovine).